We begin with the raw amino-acid sequence, 218 residues long: UPF0598 protein C8orf82 homolog (218 aa).

This sequence belongs to the UPF0598 family.

In Bos taurus (Bovine), this protein is UPF0598 protein C8orf82 homolog.